The chain runs to 1581 residues: Pentafunctional AROM polypeptide (1581 aa).

Residues 1–384 are 3-dehydroquinate synthase; it reads MPEPTKISIL…YEPKASVVPN (384 aa). Residues 44-46, 81-84, 114-116, and Asp-119 each bind NAD(+); these read DTN, EVSK, and GGV. Residue Arg-130 coordinates 7-phospho-2-dehydro-3-deoxy-D-arabino-heptonate. 139–140 contributes to the NAD(+) binding site; that stretch reads TT. 7-phospho-2-dehydro-3-deoxy-D-arabino-heptonate is bound by residues Asp-146 and Lys-152. Lys-161 contributes to the NAD(+) binding site. Asn-162 provides a ligand contact to 7-phospho-2-dehydro-3-deoxy-D-arabino-heptonate. NAD(+) is bound by residues 179–182 and Asn-190; that span reads FLET. Glu-194 contacts Zn(2+). 7-phospho-2-dehydro-3-deoxy-D-arabino-heptonate-binding positions include 194–197 and Lys-250; that span reads EVIK. The active-site Proton acceptor; for 3-dehydroquinate synthase activity is Glu-260. Residues 264–268 and His-271 each bind 7-phospho-2-dehydro-3-deoxy-D-arabino-heptonate; that span reads RNLLN. His-271 is a Zn(2+) binding site. His-275 serves as the catalytic Proton acceptor; for 3-dehydroquinate synthase activity. Residues His-287 and Lys-356 each coordinate 7-phospho-2-dehydro-3-deoxy-D-arabino-heptonate. Zn(2+) is bound at residue His-287. The segment at 397 to 842 is EPSP synthase; sequence VHPGVPKESN…WDTLRQLFSV (446 aa). Cys-824 acts as the For EPSP synthase activity in catalysis. The shikimate kinase stretch occupies residues 864-1056; sequence SASVFIIGMR…KQKKHSFFVS (193 aa). An ATP-binding site is contributed by 871–878; the sequence is GMRGAGKT. The segment at 1057 to 1277 is 3-dehydroquinase; the sequence is LTLPDLRSAS…AAPGQLSATE (221 aa). The active-site Proton acceptor; for 3-dehydroquinate dehydratase activity is His-1180. Lys-1208 acts as the Schiff-base intermediate with substrate; for 3-dehydroquinate dehydratase activity in catalysis. The segment at 1290-1581 is shikimate dehydrogenase; the sequence is KKRFAIFGNP…ARTAVLGDSA (292 aa).

It in the N-terminal section; belongs to the sugar phosphate cyclases superfamily. Dehydroquinate synthase family. This sequence in the 2nd section; belongs to the EPSP synthase family. The protein in the 3rd section; belongs to the shikimate kinase family. In the 4th section; belongs to the type-I 3-dehydroquinase family. It in the C-terminal section; belongs to the shikimate dehydrogenase family. As to quaternary structure, homodimer. Zn(2+) is required as a cofactor.

Its subcellular location is the cytoplasm. It carries out the reaction 7-phospho-2-dehydro-3-deoxy-D-arabino-heptonate = 3-dehydroquinate + phosphate. The enzyme catalyses 3-dehydroquinate = 3-dehydroshikimate + H2O. The catalysed reaction is shikimate + NADP(+) = 3-dehydroshikimate + NADPH + H(+). It catalyses the reaction shikimate + ATP = 3-phosphoshikimate + ADP + H(+). It carries out the reaction 3-phosphoshikimate + phosphoenolpyruvate = 5-O-(1-carboxyvinyl)-3-phosphoshikimate + phosphate. It participates in metabolic intermediate biosynthesis; chorismate biosynthesis; chorismate from D-erythrose 4-phosphate and phosphoenolpyruvate: step 2/7. It functions in the pathway metabolic intermediate biosynthesis; chorismate biosynthesis; chorismate from D-erythrose 4-phosphate and phosphoenolpyruvate: step 3/7. The protein operates within metabolic intermediate biosynthesis; chorismate biosynthesis; chorismate from D-erythrose 4-phosphate and phosphoenolpyruvate: step 4/7. Its pathway is metabolic intermediate biosynthesis; chorismate biosynthesis; chorismate from D-erythrose 4-phosphate and phosphoenolpyruvate: step 5/7. It participates in metabolic intermediate biosynthesis; chorismate biosynthesis; chorismate from D-erythrose 4-phosphate and phosphoenolpyruvate: step 6/7. Functionally, the AROM polypeptide catalyzes 5 consecutive enzymatic reactions in prechorismate polyaromatic amino acid biosynthesis. This is Pentafunctional AROM polypeptide from Aspergillus terreus (strain NIH 2624 / FGSC A1156).